A 386-amino-acid chain; its full sequence is Protein-glutamate methylesterase/protein-glutamine glutaminase 3 (386 aa).

One can recognise a Response regulatory domain in the interval 4 to 121 (KVLVVDDSGF…SRNPQKVKQL (118 aa)). The residue at position 55 (aspartate 55) is a 4-aspartylphosphate. Low complexity predominate over residues 132 to 194 (SNRRSSGFGS…SHAPAHPTTS (63 aa)). The interval 132–197 (SNRRSSGFGS…PAHPTTSGTA (66 aa)) is disordered. Residues 191 to 383 (PTTSGTAKRK…LDDIGRHLVE (193 aa)) enclose the CheB-type methylesterase domain. Catalysis depends on residues serine 210, histidine 237, and aspartate 330.

Belongs to the CheB family. Post-translationally, phosphorylated by CheA. Phosphorylation of the N-terminal regulatory domain activates the methylesterase activity.

It localises to the cytoplasm. The catalysed reaction is [protein]-L-glutamate 5-O-methyl ester + H2O = L-glutamyl-[protein] + methanol + H(+). It catalyses the reaction L-glutaminyl-[protein] + H2O = L-glutamyl-[protein] + NH4(+). Involved in chemotaxis. Part of a chemotaxis signal transduction system that modulates chemotaxis in response to various stimuli. Catalyzes the demethylation of specific methylglutamate residues introduced into the chemoreceptors (methyl-accepting chemotaxis proteins or MCP) by CheR. Also mediates the irreversible deamidation of specific glutamine residues to glutamic acid. The chain is Protein-glutamate methylesterase/protein-glutamine glutaminase 3 from Pseudomonas syringae pv. syringae (strain B728a).